A 1524-amino-acid chain; its full sequence is DNA polymerase alpha catalytic subunit (1524 aa).

Disordered regions lie at residues 1 to 53 and 68 to 139; these read MSGD…QKPI and RRRE…KVNP. Residues 20–30 show a composition bias toward basic and acidic residues; it reads SSRKDTLERLK. Residues 79-96 are compositionally biased toward acidic residues; it reads EDGEGGDLGYLDEGEEED. Residues cysteine 1333, cysteine 1336, cysteine 1375, cysteine 1378, cysteine 1414, cysteine 1419, cysteine 1440, and cysteine 1446 each coordinate Zn(2+). Residues 1333 to 1378 form a CysA-type zinc finger; the sequence is CPSCSTAFNCPSIISSVCASISKKPATPETEESDSTFWLKLHCPKC. The short motif at 1414-1446 is the CysB motif element; sequence CEDESCKHTTRSPNFRLLGERERGTVCPNYPNC.

The protein belongs to the DNA polymerase type-B family.

Its subcellular location is the nucleus. It catalyses the reaction DNA(n) + a 2'-deoxyribonucleoside 5'-triphosphate = DNA(n+1) + diphosphate. Its function is as follows. Polymerase alpha in a complex with DNA primase is a replicative polymerase. This is DNA polymerase alpha catalytic subunit (POLA) from Arabidopsis thaliana (Mouse-ear cress).